We begin with the raw amino-acid sequence, 336 residues long: 4-hydroxy-3-methylbut-2-enyl diphosphate reductase (336 aa).

Residue Cys-21 participates in [4Fe-4S] cluster binding. Residues His-50 and His-86 each contribute to the (2E)-4-hydroxy-3-methylbut-2-enyl diphosphate site. Dimethylallyl diphosphate is bound by residues His-50 and His-86. His-50 and His-86 together coordinate isopentenyl diphosphate. Cys-108 contacts [4Fe-4S] cluster. Residue His-136 coordinates (2E)-4-hydroxy-3-methylbut-2-enyl diphosphate. His-136 contributes to the dimethylallyl diphosphate binding site. His-136 serves as a coordination point for isopentenyl diphosphate. The active-site Proton donor is the Glu-138. Thr-177 serves as a coordination point for (2E)-4-hydroxy-3-methylbut-2-enyl diphosphate. A [4Fe-4S] cluster-binding site is contributed by Cys-207. The (2E)-4-hydroxy-3-methylbut-2-enyl diphosphate site is built by Ser-235, Ser-236, Asn-237, and Ser-280. The dimethylallyl diphosphate site is built by Ser-235, Ser-236, Asn-237, and Ser-280. Isopentenyl diphosphate-binding residues include Ser-235, Ser-236, Asn-237, and Ser-280.

It belongs to the IspH family. It depends on [4Fe-4S] cluster as a cofactor.

The enzyme catalyses isopentenyl diphosphate + 2 oxidized [2Fe-2S]-[ferredoxin] + H2O = (2E)-4-hydroxy-3-methylbut-2-enyl diphosphate + 2 reduced [2Fe-2S]-[ferredoxin] + 2 H(+). It catalyses the reaction dimethylallyl diphosphate + 2 oxidized [2Fe-2S]-[ferredoxin] + H2O = (2E)-4-hydroxy-3-methylbut-2-enyl diphosphate + 2 reduced [2Fe-2S]-[ferredoxin] + 2 H(+). It functions in the pathway isoprenoid biosynthesis; dimethylallyl diphosphate biosynthesis; dimethylallyl diphosphate from (2E)-4-hydroxy-3-methylbutenyl diphosphate: step 1/1. It participates in isoprenoid biosynthesis; isopentenyl diphosphate biosynthesis via DXP pathway; isopentenyl diphosphate from 1-deoxy-D-xylulose 5-phosphate: step 6/6. Catalyzes the conversion of 1-hydroxy-2-methyl-2-(E)-butenyl 4-diphosphate (HMBPP) into a mixture of isopentenyl diphosphate (IPP) and dimethylallyl diphosphate (DMAPP). Acts in the terminal step of the DOXP/MEP pathway for isoprenoid precursor biosynthesis. This Mesorhizobium japonicum (strain LMG 29417 / CECT 9101 / MAFF 303099) (Mesorhizobium loti (strain MAFF 303099)) protein is 4-hydroxy-3-methylbut-2-enyl diphosphate reductase.